The following is a 547-amino-acid chain: Vacuolar fusion protein MON1 homolog B (547 aa).

An N-acetylmethionine modification is found at M1. The segment covering 1-15 has biased composition (low complexity); the sequence is MEVGGDTAAPAPGGA. Positions 1 to 106 are disordered; that stretch reads MEVGGDTAAP…GGDPSDEEWR (106 aa). Residues S59 and S61 each carry the phosphoserine modification.

It belongs to the MON1/SAND family. Interacts with CCNT2; down-regulates CCNT2-mediated activation of viral promoters during herpes simplex virus 1/HHV-1 infection. Found in a complex with RMC1, CCZ1 MON1A and MON1B.

This chain is Vacuolar fusion protein MON1 homolog B (MON1B), found in Homo sapiens (Human).